The primary structure comprises 176 residues: Thiol-disulfide oxidoreductase ResA (176 aa).

Residues 11 to 30 (LSILAVISVALGYTFYSNFF) form a helical; Signal-anchor for type II membrane protein membrane-spanning segment. Residues 36 to 176 (ARAGEQAVNF…EFMELIKPEA (141 aa)) form the Thioredoxin domain. The cysteines at positions 74 and 77 are disulfide-linked.

The protein belongs to the thioredoxin family. ResA subfamily.

Its subcellular location is the cell membrane. The protein operates within protein modification; cytochrome c assembly. Thiol-disulfide oxidoreductase which is required in disulfide reduction during c-type cytochrome synthesis. May accept reducing equivalents from CcdA, leading to breakage of disulfide bonds in apocytochrome c; following this reduction heme can be covalently attached. The protein is Thiol-disulfide oxidoreductase ResA of Halalkalibacterium halodurans (strain ATCC BAA-125 / DSM 18197 / FERM 7344 / JCM 9153 / C-125) (Bacillus halodurans).